We begin with the raw amino-acid sequence, 486 residues long: Cardiolipin synthase A (486 aa).

2 consecutive transmembrane segments (helical) span residues 3-23 and 38-58; these read TFYTVISWLSVFGYWLLIAGV and MAWLLIIYILPLVGIIAYLSF. PLD phosphodiesterase domains follow at residues 219-246 and 399-426; these read MDLRQHRKIVLIDNYVAYTGSMNMVDPR and EGGLLHSKSVLVDGQLSLVGTVNLDMRS. Active-site residues include His224, Lys226, Asp231, His404, Lys406, and Asp411.

This sequence belongs to the phospholipase D family. Cardiolipin synthase subfamily. ClsA sub-subfamily.

It localises to the cell inner membrane. The catalysed reaction is 2 a 1,2-diacyl-sn-glycero-3-phospho-(1'-sn-glycerol) = a cardiolipin + glycerol. Functionally, catalyzes the reversible phosphatidyl group transfer from one phosphatidylglycerol molecule to another to form cardiolipin (CL) (diphosphatidylglycerol) and glycerol. This is Cardiolipin synthase A from Yersinia pseudotuberculosis serotype IB (strain PB1/+).